We begin with the raw amino-acid sequence, 110 residues long: MVRTKANYVPGAYRKAVASQAPRKVLGSSTFVTNSSSSSRKAENKYAGGNPVCVRPTPKWQKGIGEFFRLSPKESKKENQAPEEAGTSGLGKAKRKACPLQPDHRDDENE.

Lysine 15 is covalently cross-linked (Glycyl lysine isopeptide (Lys-Gly) (interchain with G-Cter in ubiquitin)). Positions arginine 23–asparagine 34 match the D-box motif. Lysine 24 carries the N6-acetyllysine; alternate modification. Lysine 24 participates in a covalent cross-link: Glycyl lysine isopeptide (Lys-Gly) (interchain with G-Cter in ubiquitin); alternate. Phosphoserine occurs at positions 28 and 71. Over residues serine 28 to serine 39 the composition is skewed to low complexity. The interval serine 28 to glutamate 110 is disordered. Residues glutamine 61–serine 71 carry the PIP-box motif. Basic and acidic residues predominate over residues serine 71–glutamine 80. Residues lysine 77–asparagine 79 carry the KEN box motif. Residues glutamate 84 to lysine 96 carry the Initiation motif motif.

In terms of assembly, interacts (when monoubiquitinated at Lys-15 and Lys-24) with PCNA. Interacts with isoform 2/p33ING1b of ING1. Interacts with BRCA1. Post-translationally, monoubiquitinated at Lys-15 and Lys-24 during normal S phase, promoting its association with PCNA. Also diubiquitinated at these 2 sites. Following DNA damage, monoubiquitin chains at Lys-15 and Lys-24 are probably extended, leading to disrupt the interaction with PCNA. Polyubiquitinated by the APC/C complex at the mitotic exit, leading to its degradation by the proteasome.

It localises to the nucleus. The protein localises to the cytoplasm. It is found in the perinuclear region. PCNA-binding protein that acts as a regulator of DNA repair during DNA replication. Following DNA damage, the interaction with PCNA is disrupted, facilitating the interaction between monoubiquitinated PCNA and the translesion DNA synthesis DNA polymerase eta (POLH) at stalled replisomes, facilitating the bypass of replication-fork-blocking lesions. Also acts as a regulator of centrosome number. This is PCNA-associated factor from Mus musculus (Mouse).